The following is a 462-amino-acid chain: Retinoic acid receptor alpha (462 aa).

Residues 1 to 87 (MASNSSSCPT…PPPLPRIYKP (87 aa)) form a modulating region. Polar residues predominate over residues 52 to 64 (GYSTPSPATIETQ). The segment at 52 to 77 (GYSTPSPATIETQSSSSEEIVPSPPS) is disordered. Residue Ser77 is modified to Phosphoserine; by CDK7. NR C4-type zinc fingers lie at residues 88–108 (CFVC…CEGC) and 124–148 (CHRD…LQKC). A DNA-binding region (nuclear receptor) is located at residues 88-153 (CFVCQDKSSG…RLQKCFEVGM (66 aa)). Ser96 bears the Phosphoserine; by PKB/AKT1 mark. The hinge stretch occupies residues 154 to 182 (SKESVRNDRNKKKKEVPKPECSESYTLTP). Residues Lys166 and Lys171 each participate in a glycyl lysine isopeptide (Lys-Gly) (interchain with G-Cter in SUMO) cross-link. Residues 183 to 417 (EVGELIEKVR…PLIQEMLENS (235 aa)) enclose the NR LBD domain. Residue Ser219 is modified to Phosphoserine; by PKA. An all-trans-retinoate-binding site is contributed by Cys235. The UBR5-degron signature appears at 254–258 (IADQI). Residue Ser287 participates in all-trans-retinoate binding. The residue at position 369 (Ser369) is a Phosphoserine; by PKA. Lys399 is covalently cross-linked (Glycyl lysine isopeptide (Lys-Gly) (interchain with G-Cter in SUMO)). Residues 404-419 (GSMPPLIQEMLENSEG) are required for binding corepressor NCOR1. A 9aaTAD motif is present at residues 408 to 416 (PLIQEMLEN). Residues 419-462 (GLDTLSGQPGGGGRDGGGLAPPPGSCSPSLSPSSNRSSPATHSP) are disordered. The segment covering 426–437 (QPGGGGRDGGGL) has biased composition (gly residues). Residues 444–462 (CSPSLSPSSNRSSPATHSP) show a composition bias toward low complexity.

It belongs to the nuclear hormone receptor family. NR1 subfamily. In terms of assembly, heterodimer; with RXRA (via C-terminus); association with RXRA is enhanced by pulsatile shear stress. Binds DNA preferentially as a heterodimer. RXRA serves as enhancer to induce RARA binding to RARE. Interacts with RXRG. Interacts with coactivators NCOA3 and NCOA6. Interacts with NCOA7; the interaction requires ligand-binding. Interacts (via the ligand-binding domain) with PRAME; the interaction is ligand (retinoic acid)-dependent. Interacts with AKT1; the interaction phosphorylates RARA and represses transactivation. Interacts with PRKAR1A; the interaction negatively regulates RARA transcriptional activity. Interacts with NCOR1 and NCOR2. Interacts with PRMT2. Interacts with LRIF1. Interacts with ASXL1 and NCOA1. Interacts with ACTN4. In a complex with HDAC3, HDAC5 and HDAC7; the HDACs serve as corepressors of RARA, causing its deacetylation and inhibition of RARE DNA element binding; association with HDAC3, HDAC5 and HDAC7 is increased upon oscillatory shear stress. Interacts with CDK7. In the absence of hormonal ligand, interacts with TACC1. In terms of processing, phosphorylated on serine and threonine residues. Phosphorylation does not change during cell cycle. Phosphorylation on Ser-77 is crucial for transcriptional activity. Phosphorylation by AKT1 is required for the repressor activity but has no effect on DNA binding, protein stability nor subcellular localization. Phosphorylated by PKA in vitro. This phosphorylation on Ser-219 and Ser-369 is critical for ligand binding, nuclear localization and transcriptional activity in response to FSH signaling. Post-translationally, sumoylated with SUMO2, mainly on Lys-399 which is also required for SENP6 binding. On all-trans retinoic acid (ATRA) binding, a conformational change may occur that allows sumoylation on two additional site, Lys-166 and Lys-171. Probably desumoylated by SENP6. Sumoylation levels determine nuclear localization and regulate ATRA-mediated transcriptional activity. Trimethylation enhances heterodimerization with RXRA and positively modulates the transcriptional activation. In terms of processing, ubiquitinated by UBR5, leading to its degradation: UBR5 specifically recognizes and binds ligand-bound RARA when it is not associated with coactivators (NCOAs). In presence of NCOAs, the UBR5-degron is not accessible, preventing its ubiquitination and degradation. Post-translationally, acetylated; acetylation is increased upon pulsatile shear stress and decreased upon oscillatory shear stress. As to expression, expressed in monocytes.

The protein localises to the nucleus. Its subcellular location is the cytoplasm. In terms of biological role, receptor for retinoic acid. Retinoic acid receptors bind as heterodimers to their target response elements in response to their ligands, all-trans or 9-cis retinoic acid, and regulate gene expression in various biological processes. The RXR/RAR heterodimers bind to the retinoic acid response elements (RARE) composed of tandem 5'-AGGTCA-3' sites known as DR1-DR5. In the absence of ligand, the RXR-RAR heterodimers associate with a multiprotein complex containing transcription corepressors that induce histone deacetylation, chromatin condensation and transcriptional suppression. On ligand binding, the corepressors dissociate from the receptors and associate with the coactivators leading to transcriptional activation. Formation of a complex with histone deacetylases might lead to inhibition of RARE DNA element binding and to transcriptional repression. Transcriptional activation and RARE DNA element binding might be supported by the transcription factor KLF2. RARA plays an essential role in the regulation of retinoic acid-induced germ cell development during spermatogenesis. Has a role in the survival of early spermatocytes at the beginning prophase of meiosis. In Sertoli cells, may promote the survival and development of early meiotic prophase spermatocytes. In concert with RARG, required for skeletal growth, matrix homeostasis and growth plate function. Together with RXRA, positively regulates microRNA-10a expression, thereby inhibiting the GATA6/VCAM1 signaling response to pulsatile shear stress in vascular endothelial cells. In association with HDAC3, HDAC5 and HDAC7 corepressors, plays a role in the repression of microRNA-10a and thereby promotes the inflammatory response. The chain is Retinoic acid receptor alpha (RARA) from Homo sapiens (Human).